A 513-amino-acid polypeptide reads, in one-letter code: Histidine ammonia-lyase (513 aa).

Residues 144 to 146 (ASG) constitute a cross-link (5-imidazolinone (Ala-Gly)). A 2,3-didehydroalanine (Ser) modification is found at Ser-145.

Belongs to the PAL/histidase family. Contains an active site 4-methylidene-imidazol-5-one (MIO), which is formed autocatalytically by cyclization and dehydration of residues Ala-Ser-Gly.

It is found in the cytoplasm. The enzyme catalyses L-histidine = trans-urocanate + NH4(+). It functions in the pathway amino-acid degradation; L-histidine degradation into L-glutamate; N-formimidoyl-L-glutamate from L-histidine: step 1/3. This Streptococcus pyogenes serotype M18 (strain MGAS8232) protein is Histidine ammonia-lyase.